The following is a 234-amino-acid chain: Large ribosomal subunit protein uL1 (234 aa).

Belongs to the universal ribosomal protein uL1 family. Part of the 50S ribosomal subunit.

In terms of biological role, binds directly to 23S rRNA. The L1 stalk is quite mobile in the ribosome, and is involved in E site tRNA release. Protein L1 is also a translational repressor protein, it controls the translation of the L11 operon by binding to its mRNA. The chain is Large ribosomal subunit protein uL1 from Corynebacterium aurimucosum (strain ATCC 700975 / DSM 44827 / CIP 107346 / CN-1) (Corynebacterium nigricans).